Consider the following 109-residue polypeptide: Large ribosomal subunit protein uL24 (109 aa).

The protein belongs to the universal ribosomal protein uL24 family. In terms of assembly, part of the 50S ribosomal subunit.

Its function is as follows. One of two assembly initiator proteins, it binds directly to the 5'-end of the 23S rRNA, where it nucleates assembly of the 50S subunit. One of the proteins that surrounds the polypeptide exit tunnel on the outside of the subunit. The chain is Large ribosomal subunit protein uL24 from Rickettsia massiliae (strain Mtu5).